A 105-amino-acid chain; its full sequence is MIPLTHYLILSGVLFAIGLMGVIVRRDIIVIFMCLEMMLSAANLSLVAFSRAQGTMGLPNYDGQALSIFILTIAAAEVAIGLALIVSLYRARRTASTQDLNTLKD.

3 consecutive transmembrane segments (helical) span residues 4 to 24, 28 to 48, and 66 to 86; these read LTHYLILSGVLFAIGLMGVIV, IIVIFMCLEMMLSAANLSLVA, and LSIFILTIAAAEVAIGLALIV.

Belongs to the complex I subunit 4L family. NDH-1 is composed of 14 different subunits. Subunits NuoA, H, J, K, L, M, N constitute the membrane sector of the complex.

Its subcellular location is the cell inner membrane. The catalysed reaction is a quinone + NADH + 5 H(+)(in) = a quinol + NAD(+) + 4 H(+)(out). Functionally, NDH-1 shuttles electrons from NADH, via FMN and iron-sulfur (Fe-S) centers, to quinones in the respiratory chain. The immediate electron acceptor for the enzyme in this species is believed to be ubiquinone. Couples the redox reaction to proton translocation (for every two electrons transferred, four hydrogen ions are translocated across the cytoplasmic membrane), and thus conserves the redox energy in a proton gradient. This Akkermansia muciniphila (strain ATCC BAA-835 / DSM 22959 / JCM 33894 / BCRC 81048 / CCUG 64013 / CIP 107961 / Muc) protein is NADH-quinone oxidoreductase subunit K.